We begin with the raw amino-acid sequence, 86 residues long: Small ribosomal subunit protein uS15 (86 aa).

It belongs to the universal ribosomal protein uS15 family. Part of the 30S ribosomal subunit. Forms a bridge to the 50S subunit in the 70S ribosome, contacting the 23S rRNA.

Functionally, one of the primary rRNA binding proteins, it binds directly to 16S rRNA where it helps nucleate assembly of the platform of the 30S subunit by binding and bridging several RNA helices of the 16S rRNA. Forms an intersubunit bridge (bridge B4) with the 23S rRNA of the 50S subunit in the ribosome. This Neorickettsia sennetsu (strain ATCC VR-367 / Miyayama) (Ehrlichia sennetsu) protein is Small ribosomal subunit protein uS15.